Reading from the N-terminus, the 347-residue chain is Syntaxin-32 (347 aa).

The Cytoplasmic portion of the chain corresponds to 1–325; it reads MSARHGQSSY…RYLNSISSNR (325 aa). 2 disordered regions span residues 172–191 and 208–251; these read HESR…TNPF and PLPW…QQMV. Polar residues-rich tracts occupy residues 177 to 191 and 213 to 222; these read QLFS…TNPF and NGSSSSSSQL. Over residues 237-249 the composition is skewed to low complexity; that stretch reads QQSQQQQQQQQQQ. Residues 255 to 317 enclose the t-SNARE coiled-coil homology domain; the sequence is DTYMQGRAEA…EGAQSQLARY (63 aa). Residues 326 to 346 form a helical; Anchor for type IV membrane protein membrane-spanning segment; the sequence is WLMMKIFFVLIAFLMIFLFFV. A topological domain (vesicular) is located at residue Ala347.

This sequence belongs to the syntaxin family. Part of the t-SNARE complex.

Its subcellular location is the golgi apparatus. It localises to the cis-Golgi network membrane. Vesicle trafficking protein that functions in the secretory pathway. The polypeptide is Syntaxin-32 (SYP32) (Arabidopsis thaliana (Mouse-ear cress)).